The chain runs to 293 residues: 4-diphosphocytidyl-2-C-methyl-D-erythritol kinase (293 aa).

Lys-10 is an active-site residue. 96 to 106 is a binding site for ATP; it reads PVASGIGGGSS. Asp-138 is a catalytic residue.

Belongs to the GHMP kinase family. IspE subfamily.

It catalyses the reaction 4-CDP-2-C-methyl-D-erythritol + ATP = 4-CDP-2-C-methyl-D-erythritol 2-phosphate + ADP + H(+). The protein operates within isoprenoid biosynthesis; isopentenyl diphosphate biosynthesis via DXP pathway; isopentenyl diphosphate from 1-deoxy-D-xylulose 5-phosphate: step 3/6. In terms of biological role, catalyzes the phosphorylation of the position 2 hydroxy group of 4-diphosphocytidyl-2C-methyl-D-erythritol. The protein is 4-diphosphocytidyl-2-C-methyl-D-erythritol kinase of Chelativorans sp. (strain BNC1).